A 158-amino-acid chain; its full sequence is Transcriptional repressor NrdR (158 aa).

Residues cysteine 3–cysteine 34 fold into a zinc finger. The 91-residue stretch at proline 49–aspartate 139 folds into the ATP-cone domain.

This sequence belongs to the NrdR family. Requires Zn(2+) as cofactor.

Its function is as follows. Negatively regulates transcription of bacterial ribonucleotide reductase nrd genes and operons by binding to NrdR-boxes. In Thiobacillus denitrificans (strain ATCC 25259 / T1), this protein is Transcriptional repressor NrdR.